We begin with the raw amino-acid sequence, 179 residues long: Large ribosomal subunit protein uL5 (179 aa).

This sequence belongs to the universal ribosomal protein uL5 family. Part of the 50S ribosomal subunit; part of the 5S rRNA/L5/L18/L25 subcomplex. Contacts the 5S rRNA and the P site tRNA. Forms a bridge to the 30S subunit in the 70S ribosome.

Its function is as follows. This is one of the proteins that bind and probably mediate the attachment of the 5S RNA into the large ribosomal subunit, where it forms part of the central protuberance. In the 70S ribosome it contacts protein S13 of the 30S subunit (bridge B1b), connecting the 2 subunits; this bridge is implicated in subunit movement. Contacts the P site tRNA; the 5S rRNA and some of its associated proteins might help stabilize positioning of ribosome-bound tRNAs. The protein is Large ribosomal subunit protein uL5 of Desulforapulum autotrophicum (strain ATCC 43914 / DSM 3382 / VKM B-1955 / HRM2) (Desulfobacterium autotrophicum).